The primary structure comprises 294 residues: UDP-3-O-acyl-N-acetylglucosamine deacetylase (294 aa).

Positions 75, 232, and 236 each coordinate Zn(2+). His-259 functions as the Proton donor in the catalytic mechanism.

Belongs to the LpxC family. Zn(2+) is required as a cofactor.

The enzyme catalyses a UDP-3-O-[(3R)-3-hydroxyacyl]-N-acetyl-alpha-D-glucosamine + H2O = a UDP-3-O-[(3R)-3-hydroxyacyl]-alpha-D-glucosamine + acetate. It functions in the pathway glycolipid biosynthesis; lipid IV(A) biosynthesis; lipid IV(A) from (3R)-3-hydroxytetradecanoyl-[acyl-carrier-protein] and UDP-N-acetyl-alpha-D-glucosamine: step 2/6. In terms of biological role, catalyzes the hydrolysis of UDP-3-O-myristoyl-N-acetylglucosamine to form UDP-3-O-myristoylglucosamine and acetate, the committed step in lipid A biosynthesis. This chain is UDP-3-O-acyl-N-acetylglucosamine deacetylase, found in Campylobacter fetus subsp. fetus (strain 82-40).